A 123-amino-acid polypeptide reads, in one-letter code: UPF0102 protein DR_2282 (123 aa).

Belongs to the UPF0102 family.

This is UPF0102 protein DR_2282 from Deinococcus radiodurans (strain ATCC 13939 / DSM 20539 / JCM 16871 / CCUG 27074 / LMG 4051 / NBRC 15346 / NCIMB 9279 / VKM B-1422 / R1).